The chain runs to 373 residues: DNA replication and repair protein RecF (373 aa).

ATP is bound at residue 30 to 37 (GENAQGKT).

The protein belongs to the RecF family.

The protein resides in the cytoplasm. Its function is as follows. The RecF protein is involved in DNA metabolism; it is required for DNA replication and normal SOS inducibility. RecF binds preferentially to single-stranded, linear DNA. It also seems to bind ATP. This Limosilactobacillus fermentum (strain NBRC 3956 / LMG 18251) (Lactobacillus fermentum) protein is DNA replication and repair protein RecF.